The sequence spans 250 residues: Probable transcriptional regulatory protein Nther_1800 (250 aa).

It belongs to the TACO1 family.

The protein resides in the cytoplasm. The sequence is that of Probable transcriptional regulatory protein Nther_1800 from Natranaerobius thermophilus (strain ATCC BAA-1301 / DSM 18059 / JW/NM-WN-LF).